A 278-amino-acid chain; its full sequence is UPF0758 protein BURPS1106A_0984 (278 aa).

Positions 1–64 (MQYEIVSAGE…ATAAARRGRD (64 aa)) are disordered. Positions 22 to 59 (AAAPAAPSSAVPSSAALSSAALSSAAQPTGAPPATAAA) are enriched in low complexity. The 123-residue stretch at 156–278 (LVDSPGAVDD…TFSFAQAGWI (123 aa)) folds into the MPN domain. 3 residues coordinate Zn(2+): His227, His229, and Asp240. The JAMM motif signature appears at 227–240 (HNHPSGAVRPSAAD).

This sequence belongs to the UPF0758 family.

The sequence is that of UPF0758 protein BURPS1106A_0984 from Burkholderia pseudomallei (strain 1106a).